Consider the following 186-residue polypeptide: Intraflagellar transport protein 27 homolog (186 aa).

GTP contacts are provided by residues 12–19 (GDPAVGKT), 64–68 (DSAGK), and 123–126 (NKTD).

It belongs to the small GTPase superfamily. Rab family. As to quaternary structure, component of the IFT complex B, at least composed of IFT20, IFT25, IFT27, IFT52, IFT57, IFT74, IFT81, IFT88 and TRAF3IP1. Interacts with IFT25. Interacts with IFT70B. Interacts with RABL2/RABL2A; binding is equal in the presence of GTP or GDP. Interacts with ARL6; recognizes and binds with the GTP-free form of ARL6.

The protein resides in the cell projection. It localises to the cilium. The protein localises to the cytoplasm. Its subcellular location is the flagellum. Its function is as follows. Small GTPase-like component of the intraflagellar transport (IFT) complex B that promotes the exit of the BBSome complex from cilia via its interaction with ARL6. Not involved in entry of the BBSome complex into cilium. Prevents aggregation of GTP-free ARL6. Required for hedgehog signaling. Forms a subcomplex within the IFT complex B with IFT25. Its role in intraflagellar transport is mainly seen in tissues rich in ciliated cells such as kidney and testis. Essential for male fertility, spermiogenesis and sperm flagella formation. Plays a role in the early development of the kidney. May be involved in the regulation of ureteric bud initiation. This chain is Intraflagellar transport protein 27 homolog (IFT27), found in Homo sapiens (Human).